Reading from the N-terminus, the 487-residue chain is ESCRT-I complex subunit vps23 (487 aa).

The SB domain occupies 428–487; the sequence is SERELKYYELKRKDEKLDEGIRALNQALHHESIMPASWLKGIKLLARQQFLIRDEMLQYS.

In terms of assembly, component of the ESCRT-I complex (endosomal sorting complex required for transport I).

The protein resides in the cytoplasm. It is found in the endosome. It localises to the late endosome membrane. Its function is as follows. Component of the ESCRT-I complex, a regulator of vesicular trafficking process. Binds to ubiquitinated cargo proteins and is required for the sorting of endocytic ubiquitinated cargos into multivesicular bodies (MVBs). Mediates the association to the ESCRT-0 complex. This chain is ESCRT-I complex subunit vps23 (sst6), found in Schizosaccharomyces pombe (strain 972 / ATCC 24843) (Fission yeast).